Here is a 291-residue protein sequence, read N- to C-terminus: 4-hydroxy-tetrahydrodipicolinate synthase (291 aa).

T45 contacts pyruvate. The active-site Proton donor/acceptor is the Y133. K161 (schiff-base intermediate with substrate) is an active-site residue. A pyruvate-binding site is contributed by I203.

It belongs to the DapA family. As to quaternary structure, homotetramer; dimer of dimers.

The protein resides in the cytoplasm. The enzyme catalyses L-aspartate 4-semialdehyde + pyruvate = (2S,4S)-4-hydroxy-2,3,4,5-tetrahydrodipicolinate + H2O + H(+). It functions in the pathway amino-acid biosynthesis; L-lysine biosynthesis via DAP pathway; (S)-tetrahydrodipicolinate from L-aspartate: step 3/4. Functionally, catalyzes the condensation of (S)-aspartate-beta-semialdehyde [(S)-ASA] and pyruvate to 4-hydroxy-tetrahydrodipicolinate (HTPA). This chain is 4-hydroxy-tetrahydrodipicolinate synthase, found in Methylococcus capsulatus (strain ATCC 33009 / NCIMB 11132 / Bath).